The primary structure comprises 356 residues: MDYTLDPSMTTMTDYYYPDSLSSPCDGELIQRNDKLLLAVFYCLLFVFSLLGNSLVILVLVVCKKLRNITDIYLLNLALSDLLFVFSFPFQTYYQLDQWVFGTVMCKVVSGFYYIGFYSSMFFITLMSVDRYLAVVHAVYAIKVRTIRMGTTTLSLLVWLTAIMATIPLLVFYQVASEDGVLQCYSFYNQQTLKWKIFTNFEMNILGLLIPFTIFMFCYIKILHQLKRCQNHNKTKAIRLVLIVVIASLLFWVPFNVVLFLTSLHSMHILDGCSISQQLNYATHVTEIISFTHCCVNPVIYAFVGEKFKKHLSEIFQKSCSHIFIYLGRQMPRESCEKSSSCQQHSFRSSSIDYIL.

Residues 1–35 (MDYTLDPSMTTMTDYYYPDSLSSPCDGELIQRNDK) are Extracellular-facing. Residues 36-63 (LLLAVFYCLLFVFSLLGNSLVILVLVVC) form a helical membrane-spanning segment. The Cytoplasmic segment spans residues 64-73 (KKLRNITDIY). A helical membrane pass occupies residues 74–93 (LLNLALSDLLFVFSFPFQTY). The Extracellular portion of the chain corresponds to 94 to 107 (YQLDQWVFGTVMCK). A disulfide bond links Cys-106 and Cys-184. Residues 108–129 (VVSGFYYIGFYSSMFFITLMSV) form a helical membrane-spanning segment. Topologically, residues 130-146 (DRYLAVVHAVYAIKVRT) are cytoplasmic. The chain crosses the membrane as a helical span at residues 147-172 (IRMGTTTLSLLVWLTAIMATIPLLVF). At 173 to 203 (YQVASEDGVLQCYSFYNQQTLKWKIFTNFEM) the chain is on the extracellular side. Residues 204–223 (NILGLLIPFTIFMFCYIKIL) traverse the membrane as a helical segment. Residues 224–239 (HQLKRCQNHNKTKAIR) lie on the Cytoplasmic side of the membrane. A helical transmembrane segment spans residues 240-264 (LVLIVVIASLLFWVPFNVVLFLTSL). Topologically, residues 265-281 (HSMHILDGCSISQQLNY) are extracellular. A helical membrane pass occupies residues 282–305 (ATHVTEIISFTHCCVNPVIYAFVG). Topologically, residues 306-356 (EKFKKHLSEIFQKSCSHIFIYLGRQMPRESCEKSSSCQQHSFRSSSIDYIL) are cytoplasmic.

It belongs to the G-protein coupled receptor 1 family.

The protein localises to the cell membrane. In terms of biological role, receptor for the chemokines CCL1/SCYA1/I-309. May regulate monocyte chemotaxis and thymic cell line apoptosis. The protein is C-C chemokine receptor type 8 (CCR8) of Macaca mulatta (Rhesus macaque).